We begin with the raw amino-acid sequence, 422 residues long: MLNRLSHNTVSDTVIADAIAEELDRQKTQIELIASENIVSADVLAAQGSVLTNKYAEGYPGKRYYGGCEFVDKVEQVAIDRLKQLFGAEFANVQPHSGAQANQAVFLALLQPGDRIMGLSLAHGGHLTHGSPVTMSGKWFDVVSYEVDPETHLIDMEKVREKALETKPKLIVAGASAYPRQIDFAGFREIADEVGAYLMVDMAHYAGLIAGGHYPNAVPHAHVTTSTTHKTLRGPRGGVILTNDADLAKKLNSAVFPGNQGGPLMHVIAAKAVAFGEALRPEFSDYAGQVIANAQALAKVLIQGGLGIVSGGTDSHMVLVDLRPKGVTGKIAEIALERAGLTCNKNSIPNDPEKPFVTSGIRLGSSAGTTRGFGVLEFEKIGALILRVIDALATNAEGDSAVEAEVREEVAALCEAFPIYVS.

Residues L121 and 125–127 (GHL) each bind (6S)-5,6,7,8-tetrahydrofolate. K230 carries the post-translational modification N6-(pyridoxal phosphate)lysine.

The protein belongs to the SHMT family. As to quaternary structure, homodimer. It depends on pyridoxal 5'-phosphate as a cofactor.

The protein resides in the cytoplasm. The catalysed reaction is (6R)-5,10-methylene-5,6,7,8-tetrahydrofolate + glycine + H2O = (6S)-5,6,7,8-tetrahydrofolate + L-serine. The protein operates within one-carbon metabolism; tetrahydrofolate interconversion. It participates in amino-acid biosynthesis; glycine biosynthesis; glycine from L-serine: step 1/1. Functionally, catalyzes the reversible interconversion of serine and glycine with tetrahydrofolate (THF) serving as the one-carbon carrier. This reaction serves as the major source of one-carbon groups required for the biosynthesis of purines, thymidylate, methionine, and other important biomolecules. Also exhibits THF-independent aldolase activity toward beta-hydroxyamino acids, producing glycine and aldehydes, via a retro-aldol mechanism. This Agrobacterium fabrum (strain C58 / ATCC 33970) (Agrobacterium tumefaciens (strain C58)) protein is Serine hydroxymethyltransferase 2.